A 351-amino-acid polypeptide reads, in one-letter code: Protein IQ-DOMAIN 27 (351 aa).

A disordered region spans residues 15–37 (KKSKDRSHVSGGDSVKGGDHSGD). Residues 98 to 114 (EERWAAVKIQKVFRGSL) are calmodulin-binding. IQ domains lie at 99-127 (ERWA…GIVK) and 128-150 (LQAL…SIQT). Positions 191-198 (DRRTKIVE) match the Nuclear localization signal motif. The segment covering 299–310 (SFKAKVRSHSAP) has biased composition (basic residues). The disordered stretch occupies residues 299–351 (SFKAKVRSHSAPRQRSERQRLSLDEVMASKSSVSGVSMSHQHPPRHSCSCDPL). A compositionally biased stretch (basic and acidic residues) spans 312 to 321 (QRSERQRLSL). Residues 324-337 (VMASKSSVSGVSMS) are compositionally biased toward low complexity.

The protein belongs to the IQD family. Binds to multiple calmodulin (CaM) in the presence of Ca(2+) and CaM-like proteins.

It localises to the nucleus. The protein resides in the nucleus envelope. Its subcellular location is the cytoplasm. It is found in the cytoskeleton. In terms of biological role, may be involved in cooperative interactions with calmodulins or calmodulin-like proteins. Recruits calmodulin proteins to microtubules, thus being a potential scaffold in cellular signaling and trafficking. May associate with nucleic acids and regulate gene expression at the transcriptional or post-transcriptional level. The protein is Protein IQ-DOMAIN 27 of Arabidopsis thaliana (Mouse-ear cress).